Reading from the N-terminus, the 441-residue chain is METTIMVVAMDRLTYYKLTSRYLYYFCLDRLLSCHRLDLDRDRKINWRHPKYWNYNNIPKGEKPYLRHIDLWDYRGNFKDWIIENLRSIYCSPYYFESPRYELEYPAIDYNYWDWVIDIDFKGNFKKSKEIAKEVREIFKDYGVKDIHIKFSGSKGFHIWINARYLPNEILNKGYVEGSTILTNFLNFKLRKLLDFVGKEGDTGIDLSIYKENMTVTAPFSLYYADIEGKTPISIPFPINKVEKFKPIYLQNVKPYFIRKLTKYYENFGEIRGDLTDFVDDALRYYQATKKVNNDIKIDLEINTNKKAKPKVEHSKREYIKTTIGDKEVVLNKVKLESYLNELINSNWEDGKMRGCYYLTSLCKLLGYGRDKTIKLLNRWASKYGNKYIKHIDYEVRYLYDRNGKVCSIKWLKENIPEAKTQIEIYKKYYELDKNNYLVKK.

This is an uncharacterized protein from Methanocaldococcus jannaschii (strain ATCC 43067 / DSM 2661 / JAL-1 / JCM 10045 / NBRC 100440) (Methanococcus jannaschii).